Here is a 216-residue protein sequence, read N- to C-terminus: Cytochrome c oxidase assembly protein CtaG (216 aa).

Low complexity predominate over residues 1–23 (MTDAPQHPQQPATGTPATPKAAP). The tract at residues 1-24 (MTDAPQHPQQPATGTPATPKAAPR) is disordered. Over 1–26 (MTDAPQHPQQPATGTPATPKAAPRVG) the chain is Cytoplasmic. The helical; Signal-anchor for type II membrane protein transmembrane segment at 27 to 49 (RDVRIGATCGLLVALMVGAAYAA) threads the bilayer. Topologically, residues 50–216 (VPFYNWFCRA…SEPDRPGGSI (167 aa)) are periplasmic.

The protein belongs to the COX11/CtaG family.

It is found in the cell inner membrane. In terms of biological role, exerts its effect at some terminal stage of cytochrome c oxidase synthesis, probably by being involved in the insertion of the copper B into subunit I. The protein is Cytochrome c oxidase assembly protein CtaG of Nitrobacter hamburgensis (strain DSM 10229 / NCIMB 13809 / X14).